The following is a 1356-amino-acid chain: Serine/threonine-protein kinase PSK1 (1356 aa).

Serine 10 is subject to Phosphoserine. The interval 20–115 is disordered; that stretch reads KHAITHKGTS…SVDSTVSSPL (96 aa). Composition is skewed to polar residues over residues 26 to 37 and 54 to 64; these read KGTSSSVASLQT and YDTSLSDVSTP. Low complexity predominate over residues 99 to 115; the sequence is LPSTASSSVDSTVSSPL. Phosphoserine occurs at positions 192, 202, 255, 286, and 327. In terms of domain architecture, PAS 1 spans 450 to 518; sequence RTFTSTKNSA…VLHKLLSTEG (69 aa). Residues 592 to 608 show a composition bias toward low complexity; the sequence is PTLSSSSTLSLPKMASS. Disordered regions lie at residues 592–612 and 627–660; these read PTLS…PTGS and YTKP…PVRS. One can recognise a PAS 2 domain in the interval 738–807; sequence LKLKIHSLPY…FINDKYPALD (70 aa). Position 926 is a phosphoserine (serine 926). Residues 948 to 972 form a disordered region; sequence DSRAHSQSTLSEQEQVPLENDKDSG. Residues 952-961 are compositionally biased toward polar residues; the sequence is HSQSTLSEQE. Residues serine 1018, serine 1023, serine 1035, and serine 1055 each carry the phosphoserine modification. Residues 1021–1032 show a composition bias toward polar residues; sequence TESLADSKSSGK. The disordered stretch occupies residues 1021 to 1066; sequence TESLADSKSSGKGLSPLEEEKLIDENATENGLAGSPKDEDGIIMTN. Threonine 1079 is subject to Phosphothreonine. A Protein kinase domain is found at 1096–1354; the sequence is FVSLQKMGEG…IDDINNDKWL (259 aa). ATP-binding positions include 1102–1110 and lysine 1125; that span reads MGEGAYGKV. The Proton acceptor role is filled by aspartate 1230.

It belongs to the protein kinase superfamily. Ser/Thr protein kinase family.

The protein resides in the cytoplasm. It carries out the reaction L-seryl-[protein] + ATP = O-phospho-L-seryl-[protein] + ADP + H(+). The catalysed reaction is L-threonyl-[protein] + ATP = O-phospho-L-threonyl-[protein] + ADP + H(+). In terms of biological role, serine/threonine-protein kinase involved in the control of sugar metabolism and translation. Phosphorylates UGP1, which is required for normal glycogen and beta-(1,6)-glucan synthesis. This phosphorylation shifts glucose partitioning toward cell wall glucan synthesis at the expense of glycogen synthesis. The protein is Serine/threonine-protein kinase PSK1 (PSK1) of Saccharomyces cerevisiae (strain ATCC 204508 / S288c) (Baker's yeast).